Here is a 166-residue protein sequence, read N- to C-terminus: RNA pyrophosphohydrolase (166 aa).

Residues 6 to 149 (GFRPNVGIIL…KRDVYRKAMM (144 aa)) form the Nudix hydrolase domain. The Nudix box motif lies at 38–59 (GGIHFGETPEQALYRELREEVG).

This sequence belongs to the Nudix hydrolase family. RppH subfamily. A divalent metal cation serves as cofactor.

Its function is as follows. Accelerates the degradation of transcripts by removing pyrophosphate from the 5'-end of triphosphorylated RNA, leading to a more labile monophosphorylated state that can stimulate subsequent ribonuclease cleavage. The sequence is that of RNA pyrophosphohydrolase from Acinetobacter baylyi (strain ATCC 33305 / BD413 / ADP1).